The following is a 142-amino-acid chain: Hemoglobin subunit alpha-A (142 aa).

Residues 2 to 142 (VLSAADKTNV…VGTVLTAKYR (141 aa)) enclose the Globin domain. H59 contacts O2. H88 provides a ligand contact to heme b.

It belongs to the globin family. Heterotetramer of two alpha chains and two beta chains. As to expression, red blood cells.

Its function is as follows. Involved in oxygen transport from the lung to the various peripheral tissues. The protein is Hemoglobin subunit alpha-A (HBAA) of Anser indicus (Bar-headed goose).